The primary structure comprises 338 residues: MMNDALTSLACSLKPGTTIKGKWNGNTYTLRKQLGKGANGIVYLAETSDGHVALKVSDDSLSITSEVNVLKSFSKAQSVTMGPSFFDTDDAYIPSANTKVSFYAMEYIKGPLLLKYVSDKGAEWIPVLMIQLLSSLSVLHQQGWIFGDLKPDNLIVTGPPARIRCIDVGGTTKEGRAIKEYTEFYDRGYWGYGTRKAEPSYDLFAVAMIMINSVHKKEFKKTNQPKEQLRSLIEGNPLLQKYKKALFSALNGDYQSADEMKKDMLDAGQKAAQRKQPIKASPQPATRQRQQKPRQGKITKTRYTPKQKPAKSGGLFETTLIVISVLALYFAYIIFFLI.

The Protein kinase domain maps to 28–286 (YTLRKQLGKG…PIKASPQPAT (259 aa)). ATP contacts are provided by residues 34-42 (LGKGANGIV) and Lys55. Asp148 serves as the catalytic Proton acceptor. The interval 266–312 (DAGQKAAQRKQPIKASPQPATRQRQQKPRQGKITKTRYTPKQKPAKS) is disordered. Over residues 289–309 (RQQKPRQGKITKTRYTPKQKP) the composition is skewed to basic residues.

This sequence belongs to the protein kinase superfamily. Ser/Thr protein kinase family. Post-translationally, autophosphorylated.

The catalysed reaction is L-seryl-[protein] + ATP = O-phospho-L-seryl-[protein] + ADP + H(+). It catalyses the reaction L-threonyl-[protein] + ATP = O-phospho-L-threonyl-[protein] + ADP + H(+). In terms of biological role, plays a role in the cell's commitment to sporulation; phosphorylates DNA replication initiation-control protein YabA. Deletion of this kinase delays entry into sporulation but does not affect final spore yield. Overexpression decreases biofilm formation; phosphorylation of YabA probably prevents biofilm formation. The chain is Serine/threonine-protein kinase YabT (yabT) from Bacillus subtilis (strain 168).